Consider the following 100-residue polypeptide: Large ribosomal subunit protein bL21 (100 aa).

The protein belongs to the bacterial ribosomal protein bL21 family. In terms of assembly, part of the 50S ribosomal subunit. Contacts protein L20.

Functionally, this protein binds to 23S rRNA in the presence of protein L20. The protein is Large ribosomal subunit protein bL21 of Mycoplasma mycoides subsp. mycoides SC (strain CCUG 32753 / NCTC 10114 / PG1).